A 593-amino-acid polypeptide reads, in one-letter code: Autophagy-related protein 22-2 (593 aa).

A helical transmembrane segment spans residues 42 to 62; the sequence is YGVAAEVFAVCGVGSFLPLTL. An N-linked (GlcNAc...) asparagine glycan is attached at N90. Helical transmembrane passes span 112 to 132, 159 to 179, and 181 to 201; these read SFAMYTFSLAVLIQALTLVSF, LFMLIVPPVFVLGALLVVIGV, and CLGSSFVVLNSFLPILVANDP. A disordered region spans residues 228–261; that stretch reads SWTDEEDTGDHAGPAGSKKAVEPEKASSSTSPEL. The next 4 helical transmembrane spans lie at 271-291, 305-325, 377-397, and 415-435; these read GVGLGYCAAVLVQILSILLLF, LPLRFVLLLVGIWWAAFTVVC, VVVFLAAWFLISDAIATVSGT, and LLSITATMSGMAGAFLWPIVA. N443 is a glycosylation site (N-linked (GlcNAc...) asparagine). 4 helical membrane-spanning segments follow: residues 448–468, 480–500, 525–545, and 548–568; these read LCIALFEIIPLYGMLAYIPFI, WEIFPLGIVHGVVSGGLASYC, KGSSFVGPAIVGALIDATGSV, and GFIFIGVLILLPMPLVWLVNA.

Belongs to the ATG22 family.

The protein localises to the vacuole membrane. Vacuolar effluxer which mediate the efflux of amino acids resulting from autophagic degradation. The release of autophagic amino acids allows the maintenance of protein synthesis and viability during nitrogen starvation. The chain is Autophagy-related protein 22-2 (atg22-2) from Emericella nidulans (strain FGSC A4 / ATCC 38163 / CBS 112.46 / NRRL 194 / M139) (Aspergillus nidulans).